The following is a 362-amino-acid chain: RING finger protein 32 (362 aa).

An RING-type 1; atypical zinc finger spans residues 127 to 169 (CPICKEEFELRPQVLLSCSHVFHKACLQAFEKFTNKKTCPLCR). The IQ domain maps to 186–215 (RIKCVTRIQAYWRGCVVRKWYRNLRKTVPP). The RING-type 2; atypical zinc-finger motif lies at 293–352 (CSICLAPLSAAGGQRVGAGRRSREMALLSCSHVFHHACLLALEEFSVGDRPPFHACPLCR).

In terms of tissue distribution, highly expressed in testis, less abundant in ovary.

The protein localises to the cytoplasm. In terms of biological role, may play a role in sperm formation. This Homo sapiens (Human) protein is RING finger protein 32 (RNF32).